Reading from the N-terminus, the 113-residue chain is Protein MGF 110-2L (113 aa).

The signal sequence occupies residues 1–31 (MGFFSYLGLVLVGLASLTSLASLANLQDFST).

This sequence belongs to the asfivirus MGF 110 family.

Functionally, plays a role in virus cell tropism, and may be required for efficient virus replication in macrophages. The protein is Protein MGF 110-2L of African swine fever virus (isolate Pig/Kenya/KEN-50/1950) (ASFV).